The following is a 91-amino-acid chain: Antitoxin RelJ (91 aa).

Belongs to the phD/YefM antitoxin family. As to quaternary structure, homodimer.

Functionally, antitoxin component of a type II toxin-antitoxin (TA) system. A probable antitoxin for the putative mRNA interferase RelK. This Mycobacterium tuberculosis (strain CDC 1551 / Oshkosh) protein is Antitoxin RelJ (relJ).